A 194-amino-acid polypeptide reads, in one-letter code: 22 kDa relaxation protein (194 aa).

Functionally, this protein is probably required for relaxation complex formation. This is 22 kDa relaxation protein from Salmonella typhimurium.